An 815-amino-acid polypeptide reads, in one-letter code: Lon protease 1 (815 aa).

The Lon N-terminal domain maps to V12 to I205. ATP is bound at residue G358–T365. The Lon proteolytic domain occupies T594–S775. Residues S681 and K724 contribute to the active site.

Belongs to the peptidase S16 family. As to quaternary structure, homohexamer. Organized in a ring with a central cavity.

It is found in the cytoplasm. The catalysed reaction is Hydrolysis of proteins in presence of ATP.. ATP-dependent serine protease that mediates the selective degradation of mutant and abnormal proteins as well as certain short-lived regulatory proteins. Required for cellular homeostasis and for survival from DNA damage and developmental changes induced by stress. Degrades polypeptides processively to yield small peptide fragments that are 5 to 10 amino acids long. Binds to DNA in a double-stranded, site-specific manner. This is Lon protease 1 from Hydrogenovibrio crunogenus (strain DSM 25203 / XCL-2) (Thiomicrospira crunogena).